The chain runs to 179 residues: ATP synthase subunit delta 1 (179 aa).

Belongs to the ATPase delta chain family. F-type ATPases have 2 components, F(1) - the catalytic core - and F(0) - the membrane proton channel. F(1) has five subunits: alpha(3), beta(3), gamma(1), delta(1), epsilon(1). F(0) has three main subunits: a(1), b(2) and c(10-14). The alpha and beta chains form an alternating ring which encloses part of the gamma chain. F(1) is attached to F(0) by a central stalk formed by the gamma and epsilon chains, while a peripheral stalk is formed by the delta and b chains.

Its subcellular location is the cell inner membrane. Its function is as follows. F(1)F(0) ATP synthase produces ATP from ADP in the presence of a proton or sodium gradient. F-type ATPases consist of two structural domains, F(1) containing the extramembraneous catalytic core and F(0) containing the membrane proton channel, linked together by a central stalk and a peripheral stalk. During catalysis, ATP synthesis in the catalytic domain of F(1) is coupled via a rotary mechanism of the central stalk subunits to proton translocation. In terms of biological role, this protein is part of the stalk that links CF(0) to CF(1). It either transmits conformational changes from CF(0) to CF(1) or is implicated in proton conduction. The sequence is that of ATP synthase subunit delta 1 from Syntrophotalea carbinolica (strain DSM 2380 / NBRC 103641 / GraBd1) (Pelobacter carbinolicus).